The following is a 144-amino-acid chain: D-aminoacyl-tRNA deacylase (144 aa).

Positions 136-137 (GP) match the Gly-cisPro motif, important for rejection of L-amino acids motif.

It belongs to the DTD family. As to quaternary structure, homodimer.

Its subcellular location is the cytoplasm. It catalyses the reaction glycyl-tRNA(Ala) + H2O = tRNA(Ala) + glycine + H(+). The enzyme catalyses a D-aminoacyl-tRNA + H2O = a tRNA + a D-alpha-amino acid + H(+). Functionally, an aminoacyl-tRNA editing enzyme that deacylates mischarged D-aminoacyl-tRNAs. Also deacylates mischarged glycyl-tRNA(Ala), protecting cells against glycine mischarging by AlaRS. Acts via tRNA-based rather than protein-based catalysis; rejects L-amino acids rather than detecting D-amino acids in the active site. By recycling D-aminoacyl-tRNA to D-amino acids and free tRNA molecules, this enzyme counteracts the toxicity associated with the formation of D-aminoacyl-tRNA entities in vivo and helps enforce protein L-homochirality. This Glaesserella parasuis serovar 5 (strain SH0165) (Haemophilus parasuis) protein is D-aminoacyl-tRNA deacylase.